Here is a 345-residue protein sequence, read N- to C-terminus: S-adenosylmethionine:tRNA ribosyltransferase-isomerase (345 aa).

The protein belongs to the QueA family. As to quaternary structure, monomer.

The protein resides in the cytoplasm. The catalysed reaction is 7-aminomethyl-7-carbaguanosine(34) in tRNA + S-adenosyl-L-methionine = epoxyqueuosine(34) in tRNA + adenine + L-methionine + 2 H(+). It functions in the pathway tRNA modification; tRNA-queuosine biosynthesis. In terms of biological role, transfers and isomerizes the ribose moiety from AdoMet to the 7-aminomethyl group of 7-deazaguanine (preQ1-tRNA) to give epoxyqueuosine (oQ-tRNA). In Anaeromyxobacter dehalogenans (strain 2CP-C), this protein is S-adenosylmethionine:tRNA ribosyltransferase-isomerase.